Consider the following 403-residue polypeptide: Phosphopentomutase (403 aa).

Mn(2+)-binding residues include Asp13, Asp298, His303, Asp339, His340, and His351.

This sequence belongs to the phosphopentomutase family. Mn(2+) serves as cofactor.

It localises to the cytoplasm. It catalyses the reaction 2-deoxy-alpha-D-ribose 1-phosphate = 2-deoxy-D-ribose 5-phosphate. The enzyme catalyses alpha-D-ribose 1-phosphate = D-ribose 5-phosphate. It participates in carbohydrate degradation; 2-deoxy-D-ribose 1-phosphate degradation; D-glyceraldehyde 3-phosphate and acetaldehyde from 2-deoxy-alpha-D-ribose 1-phosphate: step 1/2. Its function is as follows. Isomerase that catalyzes the conversion of deoxy-ribose 1-phosphate (dRib-1-P) and ribose 1-phosphate (Rib-1-P) to deoxy-ribose 5-phosphate (dRib-5-P) and ribose 5-phosphate (Rib-5-P), respectively. This Streptococcus pyogenes serotype M3 (strain ATCC BAA-595 / MGAS315) protein is Phosphopentomutase.